The sequence spans 715 residues: Serrate RNA effector molecule homolog (715 aa).

Disordered stretches follow at residues 1 to 87 (MDSD…YSGP), 223 to 259 (ENKD…TDKA), and 629 to 715 (EPKH…DDIP). Composition is skewed to basic and acidic residues over residues 7 to 25 (GDRR…DSYR), 37 to 57 (YDNK…SRGD), and 223 to 242 (ENKD…VKEE). The segment covering 243–256 (PNEEQEEGAIDDET) has biased composition (acidic residues). Residues 629 to 659 (EPKHMPHMSRDDHRGGGGDRGYGRERDDDRG) are compositionally biased toward basic and acidic residues.

It belongs to the ARS2 family.

It localises to the nucleus. In terms of biological role, acts as a mediator between the cap-binding complex (CBC) and the primary microRNAs (miRNAs) processing machinery. Contributes to the stability and delivery of capped primary miRNA transcripts to the primary miRNA processing complex, thereby playing a role in RNA-mediated gene silencing (RNAi) by miRNAs. This is Serrate RNA effector molecule homolog from Caenorhabditis briggsae.